Here is a 323-residue protein sequence, read N- to C-terminus: 4-hydroxyphenylpyruvate 3-dimethylallyltransferase (323 aa).

Substrate contacts are provided by R160 and E281.

Belongs to the aromatic prenyltransferase family. Monomer.

The protein resides in the cytoplasm. It catalyses the reaction 3-(4-hydroxyphenyl)pyruvate + dimethylallyl diphosphate = 3-dimethylallyl-4-hydroxyphenylpyruvate + diphosphate. It participates in antibiotic biosynthesis; novobiocin biosynthesis. Magnesium-independent aromatic prenyltransferase that catalyzes the irreversible transfer of a dimethylallyl group to 4-hydroxyphenylpyruvate to produce the ring A structure in the novobiocin biosynthesis pathway. Novobiocin is an aminocoumarin family antibiotic that targets bacterial DNA gyrases. It is able to prenylate many different compounds, including the phenylpropanoids 4-coumarate and caffeate, the plant polyketide resveratrol, the (iso)flavonoid naringenin, apigenin, daidzein and genistein, and the dihydroxynaphthalenes 1,6-DHN and 2,7-DHN. The chain is 4-hydroxyphenylpyruvate 3-dimethylallyltransferase from Streptomyces niveus (Streptomyces spheroides).